Consider the following 103-residue polypeptide: SOSS complex subunit C (103 aa).

Belongs to the SOSS-C family. In terms of assembly, belongs to the multiprotein complex Integrator. Component of the SOSS complex, composed of SOSS-B (SOSS-B1/NABP2 or SOSS-B2/NABP1), SOSS-A/INTS3 and SOSS-C/INIP.

It localises to the nucleus. Functionally, component of the SOSS complex, a multiprotein complex that functions downstream of the MRN complex to promote DNA repair and G2/M checkpoint. The SOSS complex associates with single-stranded DNA at DNA lesions and influences diverse endpoints in the cellular DNA damage response including cell-cycle checkpoint activation, recombinational repair and maintenance of genomic stability. Required for efficient homologous recombination-dependent repair of double-strand breaks (DSBs). The protein is SOSS complex subunit C (INIP) of Gallus gallus (Chicken).